Reading from the N-terminus, the 133-residue chain is Nickel-responsive regulator (133 aa).

Ni(2+) is bound by residues histidine 76, histidine 87, histidine 89, and cysteine 95.

It belongs to the transcriptional regulatory CopG/NikR family. Homotetramer. Ni(2+) serves as cofactor.

Functionally, transcriptional repressor of the nikABCDE operon. Is active in the presence of excessive concentrations of intracellular nickel. This chain is Nickel-responsive regulator, found in Salmonella choleraesuis (strain SC-B67).